We begin with the raw amino-acid sequence, 715 residues long: Polyphosphate kinase (715 aa).

Asn-60 contacts ATP. 2 residues coordinate Mg(2+): Arg-380 and Arg-410. The active-site Phosphohistidine intermediate is the His-440. Tyr-473, Arg-569, and His-597 together coordinate ATP.

Belongs to the polyphosphate kinase 1 (PPK1) family. Requires Mg(2+) as cofactor. Post-translationally, an intermediate of this reaction is the autophosphorylated ppk in which a phosphate is covalently linked to a histidine residue through a N-P bond.

The catalysed reaction is [phosphate](n) + ATP = [phosphate](n+1) + ADP. In terms of biological role, catalyzes the reversible transfer of the terminal phosphate of ATP to form a long-chain polyphosphate (polyP). This Erythrobacter litoralis (strain HTCC2594) protein is Polyphosphate kinase.